A 216-amino-acid chain; its full sequence is GTP cyclohydrolase 1 (216 aa).

3 residues coordinate Zn(2+): cysteine 108, histidine 111, and cysteine 179.

This sequence belongs to the GTP cyclohydrolase I family. As to quaternary structure, homomer.

It carries out the reaction GTP + H2O = 7,8-dihydroneopterin 3'-triphosphate + formate + H(+). Its pathway is cofactor biosynthesis; 7,8-dihydroneopterin triphosphate biosynthesis; 7,8-dihydroneopterin triphosphate from GTP: step 1/1. This is GTP cyclohydrolase 1 from Shewanella baltica (strain OS223).